The sequence spans 245 residues: Eukaryotic translation initiation factor 3 subunit K (245 aa).

The region spanning Tyr46 to Asn227 is the PCI domain.

Belongs to the eIF-3 subunit K family. As to quaternary structure, component of the eukaryotic translation initiation factor 3 (eIF-3) complex.

The protein resides in the cytoplasm. Its function is as follows. Component of the eukaryotic translation initiation factor 3 (eIF-3) complex, which is involved in protein synthesis of a specialized repertoire of mRNAs and, together with other initiation factors, stimulates binding of mRNA and methionyl-tRNAi to the 40S ribosome. The eIF-3 complex specifically targets and initiates translation of a subset of mRNAs involved in cell proliferation. The polypeptide is Eukaryotic translation initiation factor 3 subunit K (Sclerotinia sclerotiorum (strain ATCC 18683 / 1980 / Ss-1) (White mold)).